Consider the following 174-residue polypeptide: Probable N-acetyltransferase Rv2775 (174 aa).

Positions 6–172 constitute an N-acetyltransferase domain; sequence IRIRAAKPID…VGYRLYRSAP (167 aa).

The protein belongs to the acetyltransferase family.

The polypeptide is Probable N-acetyltransferase Rv2775 (Mycobacterium tuberculosis (strain ATCC 25618 / H37Rv)).